The sequence spans 627 residues: Membrane protein insertase YidC (627 aa).

A run of 6 helical transmembrane segments spans residues 3-23 (KNTVIGLVLIGLVIFGFSWLN), 376-396 (WGLIILLLTLGIKLLISPLAY), 450-470 (LPMLLQFPFLIAMYMYFPTTI), 502-522 (FYGNHVSLFCLLMSISNILYI), 534-554 (EGMAMLKWMPYITTVMFLFFF), and 558-578 (ASGLCYYYFLSSIITVIQYMS).

Belongs to the OXA1/ALB3/YidC family. Type 1 subfamily. Interacts with the Sec translocase complex via SecD. Specifically interacts with transmembrane segments of nascent integral membrane proteins during membrane integration.

It is found in the cell inner membrane. Required for the insertion and/or proper folding and/or complex formation of integral membrane proteins into the membrane. Involved in integration of membrane proteins that insert both dependently and independently of the Sec translocase complex, as well as at least some lipoproteins. Aids folding of multispanning membrane proteins. This chain is Membrane protein insertase YidC, found in Porphyromonas gingivalis (strain ATCC 33277 / DSM 20709 / CIP 103683 / JCM 12257 / NCTC 11834 / 2561).